The following is a 259-amino-acid chain: Dihydroorotate dehydrogenase B (NAD(+)), electron transfer subunit (259 aa).

One can recognise an FAD-binding FR-type domain in the interval 1 to 101 (MKIEDCTVEE…MGPLGRGYDV (101 aa)). FAD-binding positions include 52 to 55 (RPIS), 69 to 71 (IYR), and 76 to 77 (GT). The [2Fe-2S] cluster site is built by C223, C228, C231, and C245.

The protein belongs to the PyrK family. In terms of assembly, heterotetramer of 2 PyrK and 2 PyrD type B subunits. Requires [2Fe-2S] cluster as cofactor. It depends on FAD as a cofactor.

Its pathway is pyrimidine metabolism; UMP biosynthesis via de novo pathway; orotate from (S)-dihydroorotate (NAD(+) route): step 1/1. Responsible for channeling the electrons from the oxidation of dihydroorotate from the FMN redox center in the PyrD type B subunit to the ultimate electron acceptor NAD(+). The sequence is that of Dihydroorotate dehydrogenase B (NAD(+)), electron transfer subunit from Fusobacterium nucleatum subsp. nucleatum (strain ATCC 25586 / DSM 15643 / BCRC 10681 / CIP 101130 / JCM 8532 / KCTC 2640 / LMG 13131 / VPI 4355).